The chain runs to 124 residues: Large ribosomal subunit protein bL12 (124 aa).

It belongs to the bacterial ribosomal protein bL12 family. As to quaternary structure, homodimer. Part of the ribosomal stalk of the 50S ribosomal subunit. Forms a multimeric L10(L12)X complex, where L10 forms an elongated spine to which 2 to 4 L12 dimers bind in a sequential fashion. Binds GTP-bound translation factors.

Forms part of the ribosomal stalk which helps the ribosome interact with GTP-bound translation factors. Is thus essential for accurate translation. This chain is Large ribosomal subunit protein bL12, found in Akkermansia muciniphila (strain ATCC BAA-835 / DSM 22959 / JCM 33894 / BCRC 81048 / CCUG 64013 / CIP 107961 / Muc).